Reading from the N-terminus, the 144-residue chain is Protein CT_635 (144 aa).

The disordered stretch occupies residues 110-144; that stretch reads EVTNDIGHSSHKSPTPKKTKSSSQKKSKKKNWIPL. Over residues 118 to 144 the composition is skewed to basic residues; that stretch reads SSHKSPTPKKTKSSSQKKSKKKNWIPL.

This sequence belongs to the chlamydial CPn_0742/CT_635/TC_0003 family.

This chain is Protein CT_635, found in Chlamydia trachomatis serovar D (strain ATCC VR-885 / DSM 19411 / UW-3/Cx).